Reading from the N-terminus, the 38-residue chain is Photosystem II reaction center protein L (38 aa).

A helical membrane pass occupies residues 17 to 37 (SLYWGLLLIFVLAVLFSSYIF).

This sequence belongs to the PsbL family. PSII is composed of 1 copy each of membrane proteins PsbA, PsbB, PsbC, PsbD, PsbE, PsbF, PsbH, PsbI, PsbJ, PsbK, PsbL, PsbM, PsbT, PsbX, PsbY, PsbZ, Psb30/Ycf12, at least 3 peripheral proteins of the oxygen-evolving complex and a large number of cofactors. It forms dimeric complexes.

It localises to the plastid. The protein localises to the chloroplast thylakoid membrane. Functionally, one of the components of the core complex of photosystem II (PSII). PSII is a light-driven water:plastoquinone oxidoreductase that uses light energy to abstract electrons from H(2)O, generating O(2) and a proton gradient subsequently used for ATP formation. It consists of a core antenna complex that captures photons, and an electron transfer chain that converts photonic excitation into a charge separation. This subunit is found at the monomer-monomer interface and is required for correct PSII assembly and/or dimerization. In Oltmannsiellopsis viridis (Marine flagellate), this protein is Photosystem II reaction center protein L.